The following is a 141-amino-acid chain: Decarboxylase CPUR_05434 (141 aa).

The EthD domain maps to 26–121; sequence EGMSEEAYRN…MHDHEMFADT (96 aa).

It belongs to the tpcK family.

The catalysed reaction is atrochrysone carboxylate + H(+) = atrochrysone + CO2. Its function is as follows. Decarboxylase; part of the ergochrome gene cluster responsible for the typical purple-black color of the ergot sclerotia. The ergochrome gene cluster produces several ergot pigments including the yellow ergochrome secalonic acid and its derivatives, as well as the red anthraquinones endocrocin and clavorubin. The pathway begins with the synthesis of atrochrysone thioester by the polyketide synthase (PKS) CPUR_05437. The atrochrysone carboxyl ACP thioesterase CPUR_05436 then breaks the thioester bond and releases the atrochrysone carboxylic acid from CPUR_05437. The decarboxylase CPUR_05434 then catalyzes the concerted decarboxylation-elimination required to convert atochrysone carboxylic acid into emodin anthrone, which is further oxidized to emodin by the anthrone oxygenase CPUR_05435. Emodin is further modified to yield monodictyphenone via several steps involving CPUR_05427, CPUR_05428, CPUR_05429 and CPUR_05430. The short chain dehydrogenase/reductase CPUR_05418 then catalyzes the C-5 ketoreduction to give the xanthone skeleton of the monomeric units. Ergochromes formation requires further dimerization steps of different xanthone units, probably catalyzed by the cytochrome P450 monooxygenase CPUR_05419. CPUR_05425, CPUR_05426 and CPUR_05431 are unique to Claviceps, thus it is likely that they are involved in further modification of xanthone units or in their dimerization. The yellow ergochromes and the red anthraquinone pigments endocrocin and clavorubin are products from the same PKS derived precursors and the latter are likely shunt products in the pathway of xanthone biosynthesis. It is proposed that atrochrysone carboxylic acid released from the PKS CPUR_05437 can also be converted to endocrocin anthrone which is further oxidized into endocrocin by CPUR_05435. Endocrocin could be then modified to clavorubin, possibly by CPUR_05423 and CPUR_05431. Clavorubin is the principal anthraquinone metabolite produced by the cluster with a much higher yield compared to endocrocin. The polypeptide is Decarboxylase CPUR_05434 (Claviceps purpurea (strain 20.1) (Ergot fungus)).